The sequence spans 599 residues: Elongation factor 4 (599 aa).

The tr-type G domain maps to 4–186 (ENIRNFSIIA…EIVKKIPPPE (183 aa)). GTP contacts are provided by residues 16–21 (DHGKST) and 133–136 (NKID).

The protein belongs to the TRAFAC class translation factor GTPase superfamily. Classic translation factor GTPase family. LepA subfamily.

The protein localises to the cell inner membrane. It carries out the reaction GTP + H2O = GDP + phosphate + H(+). Required for accurate and efficient protein synthesis under certain stress conditions. May act as a fidelity factor of the translation reaction, by catalyzing a one-codon backward translocation of tRNAs on improperly translocated ribosomes. Back-translocation proceeds from a post-translocation (POST) complex to a pre-translocation (PRE) complex, thus giving elongation factor G a second chance to translocate the tRNAs correctly. Binds to ribosomes in a GTP-dependent manner. The polypeptide is Elongation factor 4 (Geobacter metallireducens (strain ATCC 53774 / DSM 7210 / GS-15)).